The following is a 1166-amino-acid chain: Pesticidal crystal protein Cry1Ga (1166 aa).

This sequence belongs to the delta endotoxin family.

Functionally, promotes colloidosmotic lysis by binding to the midgut epithelial cells of insects. The sequence is that of Pesticidal crystal protein Cry1Ga (cry1Ga) from Bacillus thuringiensis.